A 354-amino-acid chain; its full sequence is Uroporphyrinogen decarboxylase (354 aa).

Substrate contacts are provided by residues 27-31, aspartate 77, tyrosine 154, threonine 209, and histidine 327; that span reads RQAGR.

Belongs to the uroporphyrinogen decarboxylase family. In terms of assembly, homodimer.

It localises to the cytoplasm. It carries out the reaction uroporphyrinogen III + 4 H(+) = coproporphyrinogen III + 4 CO2. It functions in the pathway porphyrin-containing compound metabolism; protoporphyrin-IX biosynthesis; coproporphyrinogen-III from 5-aminolevulinate: step 4/4. Catalyzes the decarboxylation of four acetate groups of uroporphyrinogen-III to yield coproporphyrinogen-III. The polypeptide is Uroporphyrinogen decarboxylase (Pseudomonas putida (strain ATCC 700007 / DSM 6899 / JCM 31910 / BCRC 17059 / LMG 24140 / F1)).